The primary structure comprises 204 residues: Large ribosomal subunit protein uL4 (204 aa).

The tract at residues 49 to 75 is disordered; that stretch reads TKGRSDVSGGGKKPWRQKGRGGARAGS.

This sequence belongs to the universal ribosomal protein uL4 family. Part of the 50S ribosomal subunit.

Functionally, one of the primary rRNA binding proteins, this protein initially binds near the 5'-end of the 23S rRNA. It is important during the early stages of 50S assembly. It makes multiple contacts with different domains of the 23S rRNA in the assembled 50S subunit and ribosome. In terms of biological role, forms part of the polypeptide exit tunnel. This is Large ribosomal subunit protein uL4 from Campylobacter jejuni (strain RM1221).